The chain runs to 459 residues: Argininosuccinate lyase (459 aa).

It belongs to the lyase 1 family. Argininosuccinate lyase subfamily.

The protein resides in the cytoplasm. It catalyses the reaction 2-(N(omega)-L-arginino)succinate = fumarate + L-arginine. The protein operates within amino-acid biosynthesis; L-arginine biosynthesis; L-arginine from L-ornithine and carbamoyl phosphate: step 3/3. The polypeptide is Argininosuccinate lyase (Staphylococcus aureus (strain USA300)).